The primary structure comprises 544 residues: CTP synthase (544 aa).

An amidoligase domain region spans residues 1–267 (MSKFVFVTGG…GDLLVSRLHL (267 aa)). A CTP-binding site is contributed by Ser-13. Ser-13 provides a ligand contact to UTP. Position 14 to 19 (14 to 19 (SVGKGI)) interacts with ATP. Tyr-54 is a binding site for L-glutamine. Asp-71 contributes to the ATP binding site. Residues Asp-71 and Glu-141 each coordinate Mg(2+). CTP is bound by residues 148–150 (DIE), 188–193 (KTKPTQ), and Lys-224. Residues 188–193 (KTKPTQ) and Lys-224 each bind UTP. The Glutamine amidotransferase type-1 domain maps to 299 to 534 (YVELKDAYYS…INAAKKVIRD (236 aa)). Gly-354 lines the L-glutamine pocket. The active-site Nucleophile; for glutamine hydrolysis is Cys-381. L-glutamine contacts are provided by residues 382–385 (LGMQ), Glu-405, and Arg-462. Catalysis depends on residues His-507 and Glu-509.

It belongs to the CTP synthase family. As to quaternary structure, homotetramer.

The catalysed reaction is UTP + L-glutamine + ATP + H2O = CTP + L-glutamate + ADP + phosphate + 2 H(+). It carries out the reaction L-glutamine + H2O = L-glutamate + NH4(+). It catalyses the reaction UTP + NH4(+) + ATP = CTP + ADP + phosphate + 2 H(+). Its pathway is pyrimidine metabolism; CTP biosynthesis via de novo pathway; CTP from UDP: step 2/2. Its activity is regulated as follows. Allosterically activated by GTP, when glutamine is the substrate; GTP has no effect on the reaction when ammonia is the substrate. The allosteric effector GTP functions by stabilizing the protein conformation that binds the tetrahedral intermediate(s) formed during glutamine hydrolysis. Inhibited by the product CTP, via allosteric rather than competitive inhibition. Its function is as follows. Catalyzes the ATP-dependent amination of UTP to CTP with either L-glutamine or ammonia as the source of nitrogen. Regulates intracellular CTP levels through interactions with the four ribonucleotide triphosphates. This is CTP synthase from Dehalococcoides mccartyi (strain ATCC BAA-2266 / KCTC 15142 / 195) (Dehalococcoides ethenogenes (strain 195)).